A 151-amino-acid polypeptide reads, in one-letter code: Superoxide dismutase [Cu-Zn] A (151 aa).

Cysteine 6 carries S-palmitoyl cysteine lipidation. Cu cation-binding residues include histidine 45, histidine 47, and histidine 62. A disulfide bond links cysteine 56 and cysteine 144. Residues histidine 62, histidine 70, histidine 79, and aspartate 82 each contribute to the Zn(2+) site. Cu cation is bound at residue histidine 118.

The protein belongs to the Cu-Zn superoxide dismutase family. Homodimer, and heterodimer of Superoxide dismutase [Cu-Zn] A and B. Requires Cu cation as cofactor. It depends on Zn(2+) as a cofactor.

Its subcellular location is the cytoplasm. The protein localises to the nucleus. It catalyses the reaction 2 superoxide + 2 H(+) = H2O2 + O2. Functionally, destroys radicals which are normally produced within the cells and which are toxic to biological systems. The chain is Superoxide dismutase [Cu-Zn] A (sod1-a) from Xenopus laevis (African clawed frog).